The chain runs to 206 residues: Guanylate kinase (206 aa).

The region spanning 13–193 (PLLLVVSGPS…AVSEIMSIIS (181 aa)) is the Guanylate kinase-like domain. ATP is bound at residue 20-27 (GPSGVGKD).

It belongs to the guanylate kinase family.

It localises to the cytoplasm. It catalyses the reaction GMP + ATP = GDP + ADP. In terms of biological role, essential for recycling GMP and indirectly, cGMP. This Dehalococcoides mccartyi (strain ATCC BAA-2266 / KCTC 15142 / 195) (Dehalococcoides ethenogenes (strain 195)) protein is Guanylate kinase.